Here is a 509-residue protein sequence, read N- to C-terminus: Ribonuclease Y (509 aa).

A helical transmembrane segment spans residues 3-23 (IIFSSIFAGFILGFLIRVFLG). The KH domain occupies 197–257 (TVASVELPND…IRKELAKRTL (61 aa)). The 96-residue stretch at 323–418 (VLSHSKETAI…VQIADAISAS (96 aa)) folds into the HD domain.

It belongs to the RNase Y family.

Its subcellular location is the cell membrane. In terms of biological role, endoribonuclease that initiates mRNA decay. This Borreliella afzelii (strain PKo) (Borrelia afzelii) protein is Ribonuclease Y.